Reading from the N-terminus, the 466-residue chain is MSIASVASVFKGEHAVGSTVTVRGWVRTRRDSKAGISFLAVYDGSCFNPIQGVVPNSLENYDNEVLKLTAGCSVIVTGEIVESPGAGQAYELQVTHVEVTGWVEDPDTYPMAAKRHSIEHLRELAHLRPRTNIIGAVARVRNCLSQAIHRFYHENGFVWVSTPLITASDCEGAGEMFRVSTLDMENLPRTSDGKVDYDKDFFGKEAFLTVSGQLNGETYACALSKIYTFGPTFRAENSNTSRHLAEFWMVEPEVAFATLSDIASLAEGMLKYAFNAVLAERMDDLQFFAQHVDKTVIERLQSFVSSDFAQVDYTDAVDILQKCGREFEFPVSWGIDLSSEHERYLAEEHFKAPVVVKNYPKDIKAFYMRLNEDGKTVAAMDVLAPGIGEIIGGSQREERLDVLDMRLEEMDLNKEDYWWYRDLRRYGTVPHSGFGLGFERLVSYVTGVSNIRDVIPFPRAPRTANF.

The protein belongs to the class-II aminoacyl-tRNA synthetase family. As to quaternary structure, homodimer.

Its subcellular location is the cytoplasm. The catalysed reaction is tRNA(Asn) + L-asparagine + ATP = L-asparaginyl-tRNA(Asn) + AMP + diphosphate + H(+). This is Asparagine--tRNA ligase from Shewanella sp. (strain ANA-3).